Consider the following 283-residue polypeptide: Phosphatidylglycerol--prolipoprotein diacylglyceryl transferase (283 aa).

3 helical membrane passes run 14-34, 56-76, and 88-108; these read LGPLAVHWYGLMYLLGFALFL, MLMYGAVGVVVGGRLGEVLFY, and IFMVWKGGMSFHGGFLGVLIA. Residue arginine 139 coordinates a 1,2-diacyl-sn-glycero-3-phospho-(1'-sn-glycerol). The chain crosses the membrane as a helical span at residues 258–278; the sequence is MGQWLSLPMIVIGVALLVFFG.

This sequence belongs to the Lgt family.

It localises to the cell inner membrane. The catalysed reaction is L-cysteinyl-[prolipoprotein] + a 1,2-diacyl-sn-glycero-3-phospho-(1'-sn-glycerol) = an S-1,2-diacyl-sn-glyceryl-L-cysteinyl-[prolipoprotein] + sn-glycerol 1-phosphate + H(+). The protein operates within protein modification; lipoprotein biosynthesis (diacylglyceryl transfer). Catalyzes the transfer of the diacylglyceryl group from phosphatidylglycerol to the sulfhydryl group of the N-terminal cysteine of a prolipoprotein, the first step in the formation of mature lipoproteins. In Chromobacterium violaceum (strain ATCC 12472 / DSM 30191 / JCM 1249 / CCUG 213 / NBRC 12614 / NCIMB 9131 / NCTC 9757 / MK), this protein is Phosphatidylglycerol--prolipoprotein diacylglyceryl transferase.